Here is a 202-residue protein sequence, read N- to C-terminus: Ribosome maturation factor RimM (202 aa).

Residues 121–202 enclose the PRC barrel domain; that stretch reads ADEYYWVDLI…CITVDWQPDY (82 aa).

Belongs to the RimM family. As to quaternary structure, binds ribosomal protein uS19.

The protein localises to the cytoplasm. In terms of biological role, an accessory protein needed during the final step in the assembly of 30S ribosomal subunit, possibly for assembly of the head region. Essential for efficient processing of 16S rRNA. May be needed both before and after RbfA during the maturation of 16S rRNA. It has affinity for free ribosomal 30S subunits but not for 70S ribosomes. The chain is Ribosome maturation factor RimM from Polaromonas naphthalenivorans (strain CJ2).